Reading from the N-terminus, the 147-residue chain is Hemoglobin subunit epsilon (147 aa).

The Globin domain maps to 3 to 147; it reads HFTAEEKATV…VANALAHKYH (145 aa). A phosphoserine mark is found at Ser-14 and Ser-51. Heme b contacts are provided by His-64 and His-93.

This sequence belongs to the globin family. Heterotetramer of two alpha chains and two epsilon chains in early embryonic hemoglobin Gower-2; two zeta chains and two epsilon chains in early embryonic hemoglobin Gower-1. Red blood cells.

Its function is as follows. The epsilon chain is a beta-type chain of early mammalian embryonic hemoglobin. The chain is Hemoglobin subunit epsilon (HBE1) from Bradypus tridactylus (Pale-throated three-toed sloth).